A 764-amino-acid chain; its full sequence is Tyrosine-protein phosphatase corkscrew (764 aa).

In terms of domain architecture, SH2 spans W1–F95. A Tyrosine-protein phosphatase domain is found at F117–Y522. The tract at residues I174 to T325 is PTPase insert (Cys/Ser-rich). The disordered stretch occupies residues S246–A273. Residues S255–A273 show a composition bias toward low complexity. Substrate-binding positions include D422, C460–R466, and Q507. The active-site Phosphocysteine intermediate is C460. The disordered stretch occupies residues A599 to G666. Over residues S612–G666 the composition is skewed to low complexity.

The protein belongs to the protein-tyrosine phosphatase family. Non-receptor class subfamily.

The protein localises to the cytoplasm. It catalyses the reaction O-phospho-L-tyrosyl-[protein] + H2O = L-tyrosyl-[protein] + phosphate. Required in all receptor tyrosine kinase signaling pathways. Functions downstream of the receptor tyrosine kinase torso, acting in concert with D-Raf via tailless. Also functions downstream of Egfr (epidermal growth factor receptor) and btl (fibroblast growth factor receptor). The SH2 domain suggests that csw effects its role by mediating heteromeric protein interactions. Maternally required for normal determination of cell fates at the termini of the embryo. Required for cell fate specification of the ventral ectoderm, in the developing embryonic CNS and for embryonic tracheal cell migration. Functions during imaginal development for proper formation of adult structures such as eyes, aristae, L5 wing vein and the tarsal claw. The polypeptide is Tyrosine-protein phosphatase corkscrew (csw) (Drosophila virilis (Fruit fly)).